The sequence spans 510 residues: Light-independent protochlorophyllide reductase subunit B (510 aa).

Asp-36 is a [4Fe-4S] cluster binding site. Asp-296 serves as the catalytic Proton donor. Position 431-432 (431-432 (GM)) interacts with substrate.

This sequence belongs to the ChlB/BchB/BchZ family. As to quaternary structure, protochlorophyllide reductase is composed of three subunits; ChlL, ChlN and ChlB. Forms a heterotetramer of two ChlB and two ChlN subunits. [4Fe-4S] cluster is required as a cofactor.

It catalyses the reaction chlorophyllide a + oxidized 2[4Fe-4S]-[ferredoxin] + 2 ADP + 2 phosphate = protochlorophyllide a + reduced 2[4Fe-4S]-[ferredoxin] + 2 ATP + 2 H2O. It participates in porphyrin-containing compound metabolism; chlorophyll biosynthesis (light-independent). In terms of biological role, component of the dark-operative protochlorophyllide reductase (DPOR) that uses Mg-ATP and reduced ferredoxin to reduce ring D of protochlorophyllide (Pchlide) to form chlorophyllide a (Chlide). This reaction is light-independent. The NB-protein (ChlN-ChlB) is the catalytic component of the complex. This Synechococcus sp. (strain JA-3-3Ab) (Cyanobacteria bacterium Yellowstone A-Prime) protein is Light-independent protochlorophyllide reductase subunit B.